The sequence spans 501 residues: Putative BTB/POZ domain-containing protein L107 (501 aa).

The 72-residue stretch at 16–87 (TDLELTLVDS…FYITDIERSQ (72 aa)) folds into the BTB domain.

It belongs to the mimivirus BTB/WD family.

This chain is Putative BTB/POZ domain-containing protein L107, found in Acanthamoeba polyphaga mimivirus (APMV).